The chain runs to 37 residues: M-oxotoxin-Ot2c (37 aa).

Expressed by the venom gland.

Its subcellular location is the secreted. In terms of biological role, disrupts biological membranes, particularly those rich in phosphocholine. Has antimicrobial activity against Gram-negative bacterium E.coli, Gram-positive bacteria B.subtilis and S.aureus, and hemolytic activity against sheep, pig and guinea pig red blood cells. Has insecticidal activity against S.frugiperda ovarian cells by opening non-selective ion channels. Enhances the insecticidal activity of spider venom neurotoxic peptides. This Oxyopes takobius (Lynx spider) protein is M-oxotoxin-Ot2c.